The chain runs to 64 residues: Insect toxin OsI1 (64 aa).

Positions D1–G61 constitute an LCN-type CS-alpha/beta domain. Intrachain disulfides connect C10–C60, C14–C35, C21–C42, and C25–C44. Position 61 is a glycine amide (G61).

The protein belongs to the long (4 C-C) scorpion toxin superfamily. Sodium channel inhibitor family. Beta subfamily. As to expression, expressed by the venom gland.

Its subcellular location is the secreted. Its function is as follows. Depressant insect beta-toxins cause a transient contraction paralysis followed by a slow flaccid paralysis. They bind voltage-independently at site-4 of sodium channels (Nav) and shift the voltage of activation toward more negative potentials thereby affecting sodium channel activation and promoting spontaneous and repetitive firing. This toxin is active only on insects. This is Insect toxin OsI1 from Orthochirus scrobiculosus (Central Asian scorpion).